A 466-amino-acid polypeptide reads, in one-letter code: Cysteine--tRNA ligase (466 aa).

A Zn(2+)-binding site is contributed by Cys-27. The 'HIGH' region motif lies at 29 to 39; the sequence is PTVYNFFHIGN. Residues Cys-207, His-232, and Glu-236 each contribute to the Zn(2+) site. The 'KMSKS' region signature appears at 264–268; it reads KMSKS. Lys-267 contributes to the ATP binding site.

The protein belongs to the class-I aminoacyl-tRNA synthetase family. As to quaternary structure, monomer. The cofactor is Zn(2+).

The protein resides in the cytoplasm. The catalysed reaction is tRNA(Cys) + L-cysteine + ATP = L-cysteinyl-tRNA(Cys) + AMP + diphosphate. The chain is Cysteine--tRNA ligase from Clostridium beijerinckii (strain ATCC 51743 / NCIMB 8052) (Clostridium acetobutylicum).